The following is a 103-amino-acid chain: Large ribosomal subunit protein bL21 (103 aa).

Belongs to the bacterial ribosomal protein bL21 family. Part of the 50S ribosomal subunit. Contacts protein L20.

Its function is as follows. This protein binds to 23S rRNA in the presence of protein L20. This Actinobacillus pleuropneumoniae serotype 7 (strain AP76) protein is Large ribosomal subunit protein bL21.